The sequence spans 232 residues: 6-phosphogluconolactonase (232 aa).

This sequence belongs to the glucosamine/galactosamine-6-phosphate isomerase family. 6-phosphogluconolactonase subfamily.

The catalysed reaction is 6-phospho-D-glucono-1,5-lactone + H2O = 6-phospho-D-gluconate + H(+). It participates in carbohydrate degradation; pentose phosphate pathway; D-ribulose 5-phosphate from D-glucose 6-phosphate (oxidative stage): step 2/3. Functionally, hydrolysis of 6-phosphogluconolactone to 6-phosphogluconate. In Aggregatibacter actinomycetemcomitans (Actinobacillus actinomycetemcomitans), this protein is 6-phosphogluconolactonase (pgl).